The following is a 596-amino-acid chain: Probable tripeptidyl-peptidase SED2 (596 aa).

A signal peptide spans 1–16 (MRLLKFVCLLASVAAA). A propeptide spans 17–203 (KPTPGASHKV…LESMSVEEFA (187 aa)) (removed in mature form). A Peptidase S53 domain is found at 210–596 (LVTTACLREL…NFQALTKVLP (387 aa)). N-linked (GlcNAc...) asparagine glycosylation is present at Asn265. Residues Glu286 and Asp290 each act as charge relay system in the active site. Asn403 is a glycosylation site (N-linked (GlcNAc...) asparagine). The active-site Charge relay system is the Ser501. Ca(2+) is bound by residues Asp543 and Ile544. N-linked (GlcNAc...) asparagine glycosylation is present at Asn572. Ca(2+)-binding residues include Gly576 and Asp578.

The cofactor is Ca(2+).

The protein localises to the secreted. It localises to the extracellular space. It carries out the reaction Release of an N-terminal tripeptide from a polypeptide.. Functionally, secreted tripeptidyl-peptidase which degrades proteins at acidic pHs and is involved in virulence. The sequence is that of Probable tripeptidyl-peptidase SED2 (SED2) from Arthroderma benhamiae (strain ATCC MYA-4681 / CBS 112371) (Trichophyton mentagrophytes).